A 1254-amino-acid polypeptide reads, in one-letter code: AF4/FMR2 family member 3 (1254 aa).

A compositionally biased stretch (basic and acidic residues) spans 45–62 (YEPDRNALRRKERERRSQ). Disordered regions lie at residues 45–90 (YEPD…GDEL), 139–190 (AESR…AAQQ), 261–324 (RPMD…GENN), 350–534 (EPSK…EGQD), and 552–752 (KTTC…SVGS). Composition is skewed to polar residues over residues 67–76 (DSGSFNSGYS) and 143–158 (AQPQ…SSTP). The span at 359 to 369 (KDSQLVSSGHS) shows a compositional bias: polar residues. The span at 406–418 (QQAAQRTALRALA) shows a compositional bias: low complexity. A compositionally biased stretch (polar residues) spans 421–433 (SVVQQTNCRGSAP). A compositionally biased stretch (low complexity) spans 441–472 (SSSSGGSSSSSDSESTSGSDSETESSSSSSES). The segment covering 552–561 (KTTCKEEQRP) has biased composition (basic and acidic residues). Positions 577-605 (SPPAAVAVTAAALPPAVPSAPTESAPAPT) are enriched in low complexity. A compositionally biased stretch (basic and acidic residues) spans 615–633 (RRTERTSAGDGANCHRPEE). Low complexity-rich tracts occupy residues 694–704 (TESSSSSSSSD) and 732–749 (AASS…SRAS). Ser782 is subject to Phosphoserine. Residues 813 to 883 (PGVLSAPSAK…ASTNNTLSGN (71 aa)) form a disordered region. A compositionally biased stretch (basic and acidic residues) spans 857 to 869 (REIKKVQGRKESA). Over residues 873-883 (AASTNNTLSGN) the composition is skewed to polar residues. Phosphoserine is present on Ser908. Disordered regions lie at residues 919–991 (ASED…HRDC) and 1128–1171 (AAQA…SGLS). Composition is skewed to polar residues over residues 922–941 (DLTS…ASSN) and 960–985 (ASHN…SPGS). Low complexity-rich tracts occupy residues 1132–1146 (PSPW…GSPS) and 1154–1171 (PASS…SGLS).

It belongs to the AF4 family. In terms of tissue distribution, highest levels found in lymphoid tissues, lower levels in brain and lung.

Its subcellular location is the nucleus. Putative transcription activator that may function in lymphoid development and oncogenesis. This Mus musculus (Mouse) protein is AF4/FMR2 family member 3 (Aff3).